The chain runs to 170 residues: E1B protein, small T-antigen (170 aa).

The protein belongs to the adenoviridae E1B 19 kDa protein family.

The sequence is that of E1B protein, small T-antigen from Canine adenovirus serotype 2 (CAdV-2).